Consider the following 417-residue polypeptide: Tol-Pal system protein TolB (417 aa).

Positions M1 to A16 are cleaved as a signal peptide.

The protein belongs to the TolB family. As to quaternary structure, the Tol-Pal system is composed of five core proteins: the inner membrane proteins TolA, TolQ and TolR, the periplasmic protein TolB and the outer membrane protein Pal. They form a network linking the inner and outer membranes and the peptidoglycan layer.

It localises to the periplasm. Functionally, part of the Tol-Pal system, which plays a role in outer membrane invagination during cell division and is important for maintaining outer membrane integrity. The chain is Tol-Pal system protein TolB from Helicobacter pylori (strain HPAG1).